The primary structure comprises 365 residues: Anhydro-N-acetylmuramic acid kinase (365 aa).

Residue 12-19 (GTSMDGMD) coordinates ATP.

This sequence belongs to the anhydro-N-acetylmuramic acid kinase family.

The catalysed reaction is 1,6-anhydro-N-acetyl-beta-muramate + ATP + H2O = N-acetyl-D-muramate 6-phosphate + ADP + H(+). It functions in the pathway amino-sugar metabolism; 1,6-anhydro-N-acetylmuramate degradation. The protein operates within cell wall biogenesis; peptidoglycan recycling. Functionally, catalyzes the specific phosphorylation of 1,6-anhydro-N-acetylmuramic acid (anhMurNAc) with the simultaneous cleavage of the 1,6-anhydro ring, generating MurNAc-6-P. Is required for the utilization of anhMurNAc either imported from the medium or derived from its own cell wall murein, and thus plays a role in cell wall recycling. This chain is Anhydro-N-acetylmuramic acid kinase, found in Pseudomonas paraeruginosa (strain DSM 24068 / PA7) (Pseudomonas aeruginosa (strain PA7)).